Consider the following 114-residue polypeptide: As-peptide 126 (114 aa).

The first 22 residues, 1-22 (MSRALICSLALLAMLVISGTYA), serve as a signal peptide directing secretion. Tandem repeats lie at residues 22–29 (ASPAANAE), 30–37 (ALAAANAE), 38–45 (ASAAANAE), 46–53 (PLAAANAE), 54–61 (PLAAANAE), 62–69 (PLAAANAD), 70–77 (PIAAANAE), 78–85 (PSAAANAE), and 86–93 (PLAAANAE). Residues 22–93 (ASPAANAEAL…AEPLAAANAE (72 aa)) are 9 X 8 AA approximate tandem repeats of [AP]-[ILS]-[AP]-A-A-N-A-[DE]. Residues 23–104 (SPAANAEALA…SAGPSPLAAA (82 aa)) constitute a propeptide that is removed on maturation. Residues 82-96 (ANAEPLAAANAEPSA) show a composition bias toward low complexity. The tract at residues 82–114 (ANAEPLAAANAEPSAGPSPLAAAQDPPVVKMKG) is disordered. Gln105 bears the Pyrrolidone carboxylic acid mark. Residue Lys113 is modified to Lysine amide.

Expressed by the venom gland.

The protein localises to the secreted. The chain is As-peptide 126 from Anoplius samariensis (Solitary wasp).